Consider the following 160-residue polypeptide: Transcription elongation factor GreA (160 aa).

A coiled-coil region spans residues 1 to 31 (MAEKTYPMTLEEKEKLEKELEELKLVRRPEI).

It belongs to the GreA/GreB family.

In terms of biological role, necessary for efficient RNA polymerase transcription elongation past template-encoded arresting sites. The arresting sites in DNA have the property of trapping a certain fraction of elongating RNA polymerases that pass through, resulting in locked ternary complexes. Cleavage of the nascent transcript by cleavage factors such as GreA or GreB allows the resumption of elongation from the new 3'terminus. GreA releases sequences of 2 to 3 nucleotides. This is Transcription elongation factor GreA from Streptococcus suis (strain 98HAH33).